Consider the following 890-residue polypeptide: DNA mismatch repair protein MutS (890 aa).

607-614 (GPNMSGKS) is an ATP binding site.

Belongs to the DNA mismatch repair MutS family.

In terms of biological role, this protein is involved in the repair of mismatches in DNA. It is possible that it carries out the mismatch recognition step. This protein has a weak ATPase activity. The sequence is that of DNA mismatch repair protein MutS from Bacillus thuringiensis subsp. konkukian (strain 97-27).